The following is a 97-amino-acid chain: uncharacterized protein (97 aa).

The disordered stretch occupies residues 38 to 97; the sequence is TSPPDWNKFSGKVSINEPTTSKSKSKSTSTSTSTSTSTSTSTSTSSSTSSTSSTTSSINK. Residues 56–97 are compositionally biased toward low complexity; that stretch reads TTSKSKSKSTSTSTSTSTSTSTSTSTSSSTSSTSSTTSSINK.

This is an uncharacterized protein from Dictyostelium discoideum (Social amoeba).